We begin with the raw amino-acid sequence, 99 residues long: Aspartyl/glutamyl-tRNA(Asn/Gln) amidotransferase subunit C (99 aa).

It belongs to the GatC family. Heterotrimer of A, B and C subunits.

It carries out the reaction L-glutamyl-tRNA(Gln) + L-glutamine + ATP + H2O = L-glutaminyl-tRNA(Gln) + L-glutamate + ADP + phosphate + H(+). The catalysed reaction is L-aspartyl-tRNA(Asn) + L-glutamine + ATP + H2O = L-asparaginyl-tRNA(Asn) + L-glutamate + ADP + phosphate + 2 H(+). In terms of biological role, allows the formation of correctly charged Asn-tRNA(Asn) or Gln-tRNA(Gln) through the transamidation of misacylated Asp-tRNA(Asn) or Glu-tRNA(Gln) in organisms which lack either or both of asparaginyl-tRNA or glutaminyl-tRNA synthetases. The reaction takes place in the presence of glutamine and ATP through an activated phospho-Asp-tRNA(Asn) or phospho-Glu-tRNA(Gln). The protein is Aspartyl/glutamyl-tRNA(Asn/Gln) amidotransferase subunit C of Mycolicibacterium vanbaalenii (strain DSM 7251 / JCM 13017 / BCRC 16820 / KCTC 9966 / NRRL B-24157 / PYR-1) (Mycobacterium vanbaalenii).